Reading from the N-terminus, the 445-residue chain is Chromosome partition protein MukF (445 aa).

The interval 213–241 (LSETSATLRELQDTLQAAGDELQTQILDI) is leucine-zipper.

Belongs to the MukF family. In terms of assembly, interacts, and probably forms a ternary complex, with MukE and MukB via its C-terminal region. The complex formation is stimulated by calcium or magnesium. It is required for an interaction between MukE and MukB.

The protein resides in the cytoplasm. The protein localises to the nucleoid. Functionally, involved in chromosome condensation, segregation and cell cycle progression. May participate in facilitating chromosome segregation by condensation DNA from both sides of a centrally located replisome during cell division. Not required for mini-F plasmid partitioning. Probably acts via its interaction with MukB and MukE. Overexpression results in anucleate cells. It has a calcium binding activity. The protein is Chromosome partition protein MukF of Vibrio cholerae serotype O1 (strain ATCC 39541 / Classical Ogawa 395 / O395).